The sequence spans 186 residues: Large ribosomal subunit protein bL12c (186 aa).

Positions 1-11 are enriched in polar residues; it reads MASTLSTITLR. The disordered stretch occupies residues 1-24; it reads MASTLSTITLRSPSPSTATSTHAS. Residues 1–53 constitute a chloroplast transit peptide; sequence MASTLSTITLRSPSPSTATSTHASIPFPKKTLEFPIRTPKLQNRRATFLRPLA. Positions 12–24 are enriched in low complexity; that stretch reads SPSPSTATSTHAS.

It belongs to the bacterial ribosomal protein bL12 family.

It is found in the plastid. It localises to the chloroplast. In Nicotiana sylvestris (Wood tobacco), this protein is Large ribosomal subunit protein bL12c.